Here is a 495-residue protein sequence, read N- to C-terminus: MSLSRTTQLPFAKRQFFQVLARNYSNTQDADLVVIGGGPGGYVAAIKAAQLGMKTVCVEKNATLGGTCLNVGCIPSKALLNNSHYLHMAQHDFAARGIDCTASLNLPKMMEAKSNSVKQLTGGIKQLFKANKVGHVEGFATIVGPNTVQAKKNDGSVETINARNILIASGSEVTPFPGITIDEKQIVSSTGALSLGQVPKKMVVIGAGVIGLELGSVWQRLGAEVTAVEFLGHVGGMGIDGEVSKNFQRSLTKQGFKFLLNTKVMGASQNGSTITVEVEGAKDGKKQTLECDTLLVSVGRRPYTEGLGLSNVQIDLDNRGRVPVNERFQTKVPSIFAIGDVIEGPMLAHKAEDEGILCVEGIAGGPVHIDYNCVPSVVYTHPEVAWVGKAEEQLKQEGVAYKIGKFPFVANSRAKTNNDQEGFVKVLADKQTDRMLGVHIIGPNAGEMIAEATLAMEYGASAEDVARVCHPHPTLSEAFREANLAAYCGKAINNV.

FAD-binding positions include Glu-59–Cys-68, Lys-77, and Ser-169–Ser-171. Cys-68 and Cys-73 are oxidised to a cystine. NAD(+) contacts are provided by residues Gly-206–Glu-213, Glu-229, Val-264, and Gly-299. Residues Asp-340 and Met-346–His-349 contribute to the FAD site. His-472 serves as the catalytic Proton acceptor.

This sequence belongs to the class-I pyridine nucleotide-disulfide oxidoreductase family. Requires FAD as cofactor.

The protein resides in the mitochondrion matrix. It carries out the reaction N(6)-[(R)-dihydrolipoyl]-L-lysyl-[protein] + NAD(+) = N(6)-[(R)-lipoyl]-L-lysyl-[protein] + NADH + H(+). The protein is Dihydrolipoyl dehydrogenase, mitochondrial (dld-1) of Caenorhabditis elegans.